Here is a 280-residue protein sequence, read N- to C-terminus: Intimin (280 aa).

One can recognise a Big-1 domain in the interval 1–92 (ITEIKADKTT…MLKLLEVEFF (92 aa)). The BIG2 domain occupies 127-173 (ANGGNGKYTWYSANPAIASVDPSSGQVTLKDKGETTITVVSGDKQTA). C201 and C278 are joined by a disulfide.

It belongs to the intimin/invasin family.

Its subcellular location is the cell outer membrane. Its function is as follows. An inverse autotransporter. The protein is Intimin (eaeA) of Hafnia alvei.